A 379-amino-acid chain; its full sequence is Multicilin (379 aa).

The segment at 1–129 is necessary and sufficient for its degradation during the cell cycle; the sequence is MQACEGSAAG…AMDDLIADSS (129 aa). Disordered regions lie at residues 26 to 71 and 88 to 107; these read SRRT…APLP and LGTEASPSGDSSASQNPSLQ. The segment covering 92 to 107 has biased composition (polar residues); it reads ASPSGDSSASQNPSLQ. The segment at 130–379 is necessary and sufficient for proper nuclear localization; the sequence is SLMSPPLTNS…GGYKFRWVPS (250 aa). The segment at 171–241 is necessary and sufficient for interaction with GMNN and sufficient for homodimerization; that stretch reads PPPTEQYWKE…SVLDKLMITQ (71 aa). Residues 175–223 are a coiled coil; it reads EQYWKEVADQNQRALGTALIENNQLHVTLTQKQEEIASLRERNVQLKEL. The segment covering 291–309 has biased composition (basic and acidic residues); sequence NRDPKRPRLQPEPDSKDCS. Residues 291–312 form a disordered region; the sequence is NRDPKRPRLQPEPDSKDCSSRN.

The protein belongs to the geminin family. In terms of assembly, heterodimer (via coiled-coil domain) with GMNN (via coiled-coil domain); targets GMNN to the nucleus. Can form homodimers (in vitro, via coiled-coil domain), but these are much less stable than the heterodimer formed with GMNN.

It is found in the nucleus. In terms of biological role, transcription regulator specifically required for multiciliate cell differentiation. Acts in a multiprotein complex containing E2F4 and E2F5 that binds and activates genes required for centriole biogenesis. Required for the deuterosome-mediated acentriolar pathway. Plays a role in mitotic cell cycle progression by promoting cell cycle exit. Modulates GMNN activity by reducing its affinity for CDT1. In Mus musculus (Mouse), this protein is Multicilin (Mcidas).